A 394-amino-acid chain; its full sequence is Putative transporter AraJ (394 aa).

The Cytoplasmic portion of the chain corresponds to 1 to 4 (MKKV). The helical transmembrane segment at 5–27 (ILSLALGTFGLGMAEFGIMGVLT) threads the bilayer. The Periplasmic portion of the chain corresponds to 28 to 41 (ELAHNVGISIPAAG). The chain crosses the membrane as a helical span at residues 42–63 (HMISYYALGVVVGAPIIALFSS). Residues 64–69 (RYSLKH) are Cytoplasmic-facing. The chain crosses the membrane as a helical span at residues 70-89 (ILLFLVALCVIGNAMFTLSS). Topologically, residues 90–93 (SYLM) are periplasmic. A helical transmembrane segment spans residues 94-116 (LAIGRLVSGFPHGAFFGVGAIVL). Residues 117 to 128 (SKIIKPGKVTAA) lie on the Cytoplasmic side of the membrane. Residues 129 to 151 (VAGMVSGMTVANLLGIPLGTYLS) traverse the membrane as a helical segment. Topologically, residues 152–155 (QEFS) are periplasmic. Residues 156-178 (WRYTFLLIAVFNIAVMASVYFWV) form a helical membrane-spanning segment. At 179–198 (PDIRDEAKGNLREQFHFLRS) the chain is on the cytoplasmic side. Residues 199 to 221 (PAPWLIFAATMFGNAGVFAWFSY) traverse the membrane as a helical segment. Residues 222–235 (VKPYMMFISGFSET) lie on the Periplasmic side of the membrane. A helical membrane pass occupies residues 236-255 (AMTFIMMLVGLGMVLGNMLS). At 256–261 (GRISGR) the chain is on the cytoplasmic side. Residues 262-284 (YSPLRIAAVTDFIIVLALLMLFF) form a helical membrane-spanning segment. The Periplasmic portion of the chain corresponds to 285 to 293 (CGGMKTTSL). The chain crosses the membrane as a helical span at residues 294-316 (IFAFICCAGLFALSAPLQILLLQ). Residues 317–322 (NAKGGE) are Cytoplasmic-facing. A helical membrane pass occupies residues 323 to 342 (LLGAAGGQIAFNLGSAVGAY). The Periplasmic segment spans residues 343–351 (CGGMMLTLG). A helical transmembrane segment spans residues 352-374 (LAYNYVALPAALLSFAAMSSLLL). Topologically, residues 375–394 (YGRYKRQQAADTPVLAKPLG) are cytoplasmic.

The protein belongs to the major facilitator superfamily.

Its subcellular location is the cell inner membrane. Its function is as follows. May be involved in either the transport or processing of arabinose polymers. This chain is Putative transporter AraJ (araJ), found in Escherichia coli (strain K12).